Reading from the N-terminus, the 278-residue chain is Elongation factor Ts (278 aa).

The segment at 81–84 is involved in Mg(2+) ion dislocation from EF-Tu; the sequence is TDFV.

The protein belongs to the EF-Ts family.

The protein localises to the cytoplasm. Its function is as follows. Associates with the EF-Tu.GDP complex and induces the exchange of GDP to GTP. It remains bound to the aminoacyl-tRNA.EF-Tu.GTP complex up to the GTP hydrolysis stage on the ribosome. This is Elongation factor Ts from Thermobifida fusca (strain YX).